The chain runs to 202 residues: tRNA (pseudouridine(54)-N(1))-methyltransferase (202 aa).

S-adenosyl-L-methionine is bound by residues Leu130, Gly152, and Cys185.

This sequence belongs to the methyltransferase superfamily. TrmY family. In terms of assembly, homodimer.

It localises to the cytoplasm. The catalysed reaction is pseudouridine(54) in tRNA + S-adenosyl-L-methionine = N(1)-methylpseudouridine(54) in tRNA + S-adenosyl-L-homocysteine + H(+). Specifically catalyzes the N1-methylation of pseudouridine at position 54 (Psi54) in tRNAs. This Methanococcoides burtonii (strain DSM 6242 / NBRC 107633 / OCM 468 / ACE-M) protein is tRNA (pseudouridine(54)-N(1))-methyltransferase.